Reading from the N-terminus, the 256-residue chain is Protein FixA (256 aa).

It belongs to the ETF beta-subunit/FixA family. Heterodimer of FixA and FixB.

The protein operates within amine and polyamine metabolism; carnitine metabolism. In terms of biological role, required for anaerobic carnitine reduction. May bring reductant to CaiA. This Escherichia coli O6:H1 (strain CFT073 / ATCC 700928 / UPEC) protein is Protein FixA.